Consider the following 570-residue polypeptide: MFS-type transporter pigP (570 aa).

The tract at residues 14–54 (GMIKKAHPEQTPPDVSHEGDVATEKGDSDGVEQAAPTGPTD) is disordered. Basic and acidic residues predominate over residues 28–41 (VSHEGDVATEKGDS). The next 7 helical transmembrane spans lie at 65-85 (VMIM…TSII), 99-119 (LPDV…LVPL), 131-151 (WSFV…GVAT), 162-182 (VAGM…AGCV), 192-212 (GLLM…GGAF), 221-241 (CFYI…FVHI), and 263-283 (LVGF…LQYG). The N-linked (GlcNAc...) asparagine glycan is linked to N290. Transmembrane regions (helical) follow at residues 293-313 (VVIG…LWEW), 336-356 (VVYG…PIYF), 369-389 (VYIL…GALV), 392-412 (FGYY…GNGL), 425-445 (WIGY…MPII), 455-475 (LIPV…STFL), and 533-553 (VFYL…GMGW).

This sequence belongs to the major facilitator superfamily. TCR/Tet family.

It localises to the cell membrane. MFS-type transporter; part of the gene cluster that mediates the biosynthesis of azaphilone pigments (MonAzPs), very widely used as food colorant. The sequence is that of MFS-type transporter pigP from Monascus ruber (Mold).